Reading from the N-terminus, the 96-residue chain is Co-chaperonin GroES (96 aa).

Belongs to the GroES chaperonin family. In terms of assembly, heptamer of 7 subunits arranged in a ring. Interacts with the chaperonin GroEL.

The protein resides in the cytoplasm. Its function is as follows. Together with the chaperonin GroEL, plays an essential role in assisting protein folding. The GroEL-GroES system forms a nano-cage that allows encapsulation of the non-native substrate proteins and provides a physical environment optimized to promote and accelerate protein folding. GroES binds to the apical surface of the GroEL ring, thereby capping the opening of the GroEL channel. This is Co-chaperonin GroES from Thioalkalivibrio sulfidiphilus (strain HL-EbGR7).